Consider the following 268-residue polypeptide: Small ribosomal subunit protein uS3 (268 aa).

Positions 38-106 (IRKLLATGME…QVQLNILEVK (69 aa)) constitute a KH type-2 domain. The disordered stretch occupies residues 217–268 (NTAAPAGDRPRRERPSRPRRSGATGTTATSTEAGRAATATADAPATEQNQEG). Residues 237-268 (SGATGTTATSTEAGRAATATADAPATEQNQEG) show a composition bias toward low complexity.

Belongs to the universal ribosomal protein uS3 family. As to quaternary structure, part of the 30S ribosomal subunit. Forms a tight complex with proteins S10 and S14.

In terms of biological role, binds the lower part of the 30S subunit head. Binds mRNA in the 70S ribosome, positioning it for translation. The protein is Small ribosomal subunit protein uS3 of Rhodococcus erythropolis (strain PR4 / NBRC 100887).